A 111-amino-acid polypeptide reads, in one-letter code: Stress-response A/B barrel domain-containing protein At5g22580 (111 aa).

The Stress-response A/B barrel domain maps to 6–98 (FKHLVVVKFK…VIDKIVLLDF (93 aa)). Residues Val-31, Ile-34, Asp-35, and Val-37 each contribute to the Mg(2+) site.

As to quaternary structure, homodimer. Requires Mg(2+) as cofactor.

In terms of biological role, involved in stress response. This chain is Stress-response A/B barrel domain-containing protein At5g22580, found in Arabidopsis thaliana (Mouse-ear cress).